The primary structure comprises 1012 residues: 5'-3' exoribonuclease 2 (1012 aa).

A CCHC-type zinc finger spans residues 264–281 (GKCFLCGQEGHRAADCEG). 3 disordered regions span residues 411 to 439 (VQQR…AQAS), 888 to 976 (TFKD…QRQV), and 990 to 1012 (QRKK…PKTA). Basic and acidic residues predominate over residues 415–433 (QSERFRRDKARDKARDNAR). The span at 904-914 (ITPKKMNSPQR) shows a compositional bias: polar residues. Basic and acidic residues-rich tracts occupy residues 918–928 (WKKDETPQSRE) and 950–962 (PQRE…KKEN). Basic residues predominate over residues 990-1002 (QRKKEKYLRKKAK).

Belongs to the 5'-3' exonuclease family. XRN2/RAT1 subfamily. In terms of tissue distribution, expressed in roots, leaves, stems and flowers.

The protein resides in the nucleus. In terms of biological role, possesses 5'-&gt;3' exoribonuclease activity. Acts as an endogenous post-transcriptional gene silencing (PTGS) suppressor. Degrades miRNA-derived loops, excised during miRNA maturation in the nucleus. Involved in pre-rRNA processing. Involved in the primary exonucleolytic shortening of the 5' external transcribed spacer (5'ETS), required for endonucleolytic processing at site P by the U3 snoRNP complex. Involved with XRN3 in the 5'-end processing of 5.8S and 25S rRNAs. Contributes with XRN3 to polyadenylation-dependent nuclear RNA surveillance. Involved in the degradation of aberrant polyadenylated pre-rRNA through 5'-end processing. The sequence is that of 5'-3' exoribonuclease 2 from Arabidopsis thaliana (Mouse-ear cress).